Here is a 492-residue protein sequence, read N- to C-terminus: Stage IV sporulation protein A (492 aa).

The short motif at 24–31 (GAVRTGKS) is the Walker A motif; involved in ATP-binding and hydrolysis element. 24–31 (GAVRTGKS) is a binding site for ATP.

Polymerizes to self-assemble into static filaments. ATP hydrolysis is required by every subunit for incorporation into the growing polymer by inducing a conformational change that drives polymerization of a nucleotide-free filament. Polymerization requires a critical concentration of the protein and only occurs after it is localized to the surface of the developing spore. Interacts (via extreme C-terminus Gly-486) with SpoVM (via Ile-6). Interacts (via full-length) with SpoVID (via C-terminus 499-575 AA). Interacts with SafA. Post-translationally, seems to be cleaved by the YabG protease.

It localises to the cytoplasm. It catalyses the reaction ATP + H2O = ADP + phosphate + H(+). In terms of biological role, ATPase. Has a role at an early stage in the morphogenesis of the spore coat outer layers. Its ATP hydrolysis is required for proper assembly of the spore coat. Forms a basement layer around the outside surface of the forespore and self-assembles irreversibly into higher order structures by binding and hydrolyzing ATP thus creating a durable and stable platform upon which thereafter morphogenesis of the coat can take place. Required for proper localization of spore coat protein CotE and sporulation-specific proteins including SpoVM. The protein is Stage IV sporulation protein A (spoIVA) of Bacillus subtilis (strain 168).